The chain runs to 308 residues: MDPMSNLPFTVAALYCFAPLPQYESLREPLAQLCCANGIKGTLLLAAEGINGTVAGSAGAIEKLIAHITAIPGLGEPELKYSHASEMPFHRMKVRLKREIVTMGVEGIDPLKSVGTYIAPKDWNALIADENTVVVDTRNDYEYAIGTFEGAIDPQTRTFREFPEWVKQNRDRLEGKKIAMFCTGGIRCEKATAFVKGLGFDDVYHLKGGILKYLEEVPREQSVWNGECFVFDERVAVGHGLAESDVELCRACRRPLTPQDKLSQFFEEGVSCAGCYAERTPEDRARYAERQKQVKLAEKRGANKHIGS.

A Rhodanese domain is found at 128 to 222 (ADENTVVVDT…YLEEVPREQS (95 aa)). Catalysis depends on Cys-182, which acts as the Cysteine persulfide intermediate.

Belongs to the TrhO family.

The catalysed reaction is uridine(34) in tRNA + AH2 + O2 = 5-hydroxyuridine(34) in tRNA + A + H2O. Its function is as follows. Catalyzes oxygen-dependent 5-hydroxyuridine (ho5U) modification at position 34 in tRNAs. In Brucella suis biovar 1 (strain 1330), this protein is tRNA uridine(34) hydroxylase.